Here is an 826-residue protein sequence, read N- to C-terminus: Receptor-like protein 18 (826 aa).

Over 1–780 the chain is Extracellular; sequence MRCQVWNVIE…EEDEEEVISW (780 aa). LRR repeat units lie at residues 5–31, 32–54, 55–79, 81–103, 104–127, 128–150, and 151–177; these read VWNVIELNLSSSCLHGLLNSKSNIFSL, QNLRFLDLSNNHFSGQILSSLGN, FSSLTTLDLSENHFSGQIPSSLGNL, HLTSLDLTDNNFVGDIPTSLGNL, SHLTLLLLGANNLVGEIPFSLGNL, SHLTDLTLCENDLAGEIPSSFEN, and LSHLTNLDLSQNNLVGEIPSFFGSFNQ. N-linked (GlcNAc...) asparagine glycans are attached at residues N12 and N54. N-linked (GlcNAc...) asparagine glycosylation is found at N102, N126, and N150. An LRR 8; degenerate repeat occupies 178–198; sequence LVSLAVEENEFTGNFLLILLN. Residues N198, N201, and N219 are each glycosylated (N-linked (GlcNAc...) asparagine). LRR repeat units follow at residues 199-223, 225-247, 248-271, 273-294, 296-318, 319-343, 345-368, 382-405, 406-429, 430-452, 455-478, 479-500, 501-524, 525-550, 552-570, 571-594, 637-661, 662-685, 686-709, and 711-734; these read LTNLSDLSLSRNQFTGTLPPNMSSL, NLVLFYADANAFTGTIPSSLLNI, PSLSCFDLSDNQLNGNIEFGNISS, LSDLLLGNNNFRGSIHKSISKL, NLYTLDLSHFNTQGSINFSIFSD, LKLLVDLHLSHLNTTTTIDLNTFLS, FKSLDTLDLSGNHISAINKSSVSN, PLLLSRFNLSGCGVTEFPEFLRTQ, QTMEILDISNNKINGQVPGWLWTL, PTLDYVNLSNNTFTGFQRLMVPS, QPSMNYFSGANNNFTGNLPAFICA, FTLQALHLRKNHLSGVFPENIS, ESLKSLDVGHNQLVGKLPRSLVRI, SSLEVLNVENNKINDTFPFWLSSLEE, QVLVLRSNAFHGPMQQTRF, PNLRIIDVSHNHFNGTLPSDFFVN, LKIFTSVDFSRNKFEGEIPKSIGLL, KELHVLNLSSNTFTGHIPSSMGKL, RELESLDVAQNKLSGDIPQDLGDL, and YLAYMNFSHNQLVGPLPGGTQFLT. A glycan (N-linked (GlcNAc...) asparagine) is linked at N268. N-linked (GlcNAc...) asparagine glycans are attached at residues N312, N331, N362, and N389. 4 N-linked (GlcNAc...) asparagine glycosylation sites follow: N436, N439, N467, and N498. N-linked (GlcNAc...) asparagine glycosylation is present at N538. Residues N584 and N594 are each glycosylated (N-linked (GlcNAc...) asparagine). An N-linked (GlcNAc...) asparagine glycan is attached at N668. N-linked (GlcNAc...) asparagine glycosylation is found at N716 and N736. Residues 781–801 traverse the membrane as a helical segment; sequence IAATIGFIPGIAFGLMMGYIL. The Cytoplasmic portion of the chain corresponds to 802-826; sequence VCYKPEWFMNVFGKNKSRSTSSTTR.

This sequence belongs to the RLP family.

It is found in the cell membrane. The protein is Receptor-like protein 18 of Arabidopsis thaliana (Mouse-ear cress).